The sequence spans 412 residues: Putative F-box protein At3g22940 (412 aa).

The region spanning 1 to 38 (MPLEEILSRLPLKSTRAVRSTCKKWDSLFKNRSFISKA) is the F-box domain.

This Arabidopsis thaliana (Mouse-ear cress) protein is Putative F-box protein At3g22940.